Reading from the N-terminus, the 223-residue chain is Ribonuclease T (223 aa).

An Exonuclease domain is found at 20-194; the sequence is VVIDVETAGF…YDTERTAELF (175 aa). Residues Asp23, Glu25, His181, and Asp186 each coordinate Mg(2+). His181 serves as the catalytic Proton donor/acceptor.

The protein belongs to the RNase T family. In terms of assembly, homodimer. Mg(2+) serves as cofactor.

Functionally, trims short 3' overhangs of a variety of RNA species, leaving a one or two nucleotide 3' overhang. Responsible for the end-turnover of tRNA: specifically removes the terminal AMP residue from uncharged tRNA (tRNA-C-C-A). Also appears to be involved in tRNA biosynthesis. The polypeptide is Ribonuclease T (Shewanella sp. (strain W3-18-1)).